The chain runs to 504 residues: 26S proteasome non-ATPase regulatory subunit 5 (504 aa).

Alanine 2 is modified (N-acetylalanine).

Belongs to the proteasome subunit S5B/HSM3 family. As to quaternary structure, interacts with PSMC1, PSMC2, PSMD1 and PSMD6. Part of transient complex containing PSMD5, PSMC2, PSMC1 and PSMD2 formed during the assembly of the 26S proteasome.

In terms of biological role, acts as a chaperone during the assembly of the 26S proteasome, specifically of the base subcomplex of the PA700/19S regulatory complex (RC). In the initial step of the base subcomplex assembly is part of an intermediate PSMD5:PSMC2:PSMC1:PSMD2 module which probably assembles with a PSMD10:PSMC4:PSMC5:PAAF1 module followed by dissociation of PSMD5. This Mus musculus (Mouse) protein is 26S proteasome non-ATPase regulatory subunit 5 (Psmd5).